Reading from the N-terminus, the 324-residue chain is 26S proteasome non-ATPase regulatory subunit 7 (324 aa).

An MPN domain is found at 9–144 (VVVHPLVLLS…TEAYISVEEV (136 aa)). Lys180 is covalently cross-linked (Glycyl lysine isopeptide (Lys-Gly) (interchain with G-Cter in ubiquitin)). N6-acetyllysine occurs at positions 204, 214, 316, and 317. Positions 281–324 (ANRDAEKKEGQEKEESKKDRKEDKEKDKDKEKSDVKKEEKKEKK) are disordered.

The protein belongs to the peptidase M67A family. In terms of assembly, component of the 19S proteasome regulatory particle complex. The 26S proteasome consists of a 20S core particle (CP) and two 19S regulatory subunits (RP). The regulatory particle is made of a lid composed of 9 subunits including PSMD7, a base containing 6 ATPases and few additional components. Within the complex, PSMD7 interacts with subunit PSMD4 through their respective MPN domain. Interacts with TRIM5.

Its function is as follows. Component of the 26S proteasome, a multiprotein complex involved in the ATP-dependent degradation of ubiquitinated proteins. This complex plays a key role in the maintenance of protein homeostasis by removing misfolded or damaged proteins, which could impair cellular functions, and by removing proteins whose functions are no longer required. Therefore, the proteasome participates in numerous cellular processes, including cell cycle progression, apoptosis, or DNA damage repair. This is 26S proteasome non-ATPase regulatory subunit 7 (PSMD7) from Homo sapiens (Human).